Here is a 615-residue protein sequence, read N- to C-terminus: uncharacterized protein (615 aa).

Ser-48 is modified (phosphoserine). A compositionally biased stretch (acidic residues) spans 424-433 (DRENELEEGS). The tract at residues 424-615 (DRENELEEGS…YARKKTKKNV (192 aa)) is disordered. Basic and acidic residues-rich tracts occupy residues 439-476 (DNER…KEVG), 484-496 (DGNK…KEVA), 504-521 (ESEK…KEVA), and 529-561 (ESEK…EPSK). Composition is skewed to basic residues over residues 579-589 (KKPKVVKKVAK) and 606-615 (YARKKTKKNV).

This is an uncharacterized protein from Arabidopsis thaliana (Mouse-ear cress).